The sequence spans 152 residues: Anaerobic nitrite reductase SYMA (152 aa).

One can recognise a Globin domain in the interval 2-151 (ALTERQEALL…LVATIKAEMK (150 aa)). The Homodimerization signature appears at 35-39 (EAAPE). Positions 45, 59, 63, 93, and 98 each coordinate heme b. Positions 105 to 117 (DPHFEVMKGALLG) match the Homodimerization motif.

The protein belongs to the plant globin family. As to quaternary structure, homodimer. The cofactor is heme b. As to expression, root nodules.

Its subcellular location is the cytoplasm. It is found in the nucleus. The enzyme catalyses Fe(III)-heme b-[protein] + nitric oxide + H2O = Fe(II)-heme b-[protein] + nitrite + 2 H(+). Phytoglobin that reduces nitrite to nitric oxide (NO) under anoxic conditions (e.g. during flooding or in waterlogged soil) and upon root nodulation. Required for general plant development and during nodulation, especially for the onset of symbiosis. Monitors nitric oxide (NO) levels during early phase of the nitrogen-fixing symbiosis and buffers oxygen in functioning nodules. May not function as an oxygen storage or transport protein. Has an unusually high affinity for O(2) through a hexacoordinate heme iron because of a very low dissociation constant. This Casuarina glauca (Swamp oak) protein is Anaerobic nitrite reductase SYMA.